The primary structure comprises 101 residues: Urease subunit beta (101 aa).

It belongs to the urease beta subunit family. As to quaternary structure, heterotrimer of UreA (gamma), UreB (beta) and UreC (alpha) subunits. Three heterotrimers associate to form the active enzyme.

It localises to the cytoplasm. The enzyme catalyses urea + 2 H2O + H(+) = hydrogencarbonate + 2 NH4(+). It participates in nitrogen metabolism; urea degradation; CO(2) and NH(3) from urea (urease route): step 1/1. The polypeptide is Urease subunit beta (Burkholderia multivorans (strain ATCC 17616 / 249)).